We begin with the raw amino-acid sequence, 109 residues long: MWLLIFNIIFNGETMKLAVDAVFYVREGFNFEKAFKEVLKILGEDVKILSVEYPELALISENGYYYRCGFMLDKELREELSGEEINKIKEKIKKLFEDEIIYTLTCEIL.

This is an uncharacterized protein from Methanocaldococcus jannaschii (strain ATCC 43067 / DSM 2661 / JAL-1 / JCM 10045 / NBRC 100440) (Methanococcus jannaschii).